We begin with the raw amino-acid sequence, 140 residues long: Nucleoside diphosphate kinase (140 aa).

Residues K11, F59, R87, T93, R104, and N114 each coordinate ATP. The active-site Pros-phosphohistidine intermediate is the H117.

This sequence belongs to the NDK family. As to quaternary structure, homotetramer. Mg(2+) is required as a cofactor.

Its subcellular location is the cytoplasm. The enzyme catalyses a 2'-deoxyribonucleoside 5'-diphosphate + ATP = a 2'-deoxyribonucleoside 5'-triphosphate + ADP. It catalyses the reaction a ribonucleoside 5'-diphosphate + ATP = a ribonucleoside 5'-triphosphate + ADP. Major role in the synthesis of nucleoside triphosphates other than ATP. The ATP gamma phosphate is transferred to the NDP beta phosphate via a ping-pong mechanism, using a phosphorylated active-site intermediate. This Sinorhizobium fredii (strain NBRC 101917 / NGR234) protein is Nucleoside diphosphate kinase.